A 473-amino-acid chain; its full sequence is Photosystem II CP43 reaction center protein (473 aa).

Positions 1 to 14 (MKILYSLRRFYHVE) are excised as a propeptide. Thr-15 carries the post-translational modification N-acetylthreonine. Position 15 is a phosphothreonine (Thr-15). Helical transmembrane passes span 69-93 (LFEV…PHLA), 134-155 (LLGP…KDRN), 178-200 (KALY…RKIT), 255-275 (KPFA…LSYS), and 291-312 (WFNN…ASQA). Glu-367 contributes to the [CaMn4O5] cluster binding site. The helical transmembrane segment at 447-471 (RARAAAAGFEKGIDRDLEPVLYMTP) threads the bilayer.

It belongs to the PsbB/PsbC family. PsbC subfamily. In terms of assembly, PSII is composed of 1 copy each of membrane proteins PsbA, PsbB, PsbC, PsbD, PsbE, PsbF, PsbH, PsbI, PsbJ, PsbK, PsbL, PsbM, PsbT, PsbX, PsbY, PsbZ, Psb30/Ycf12, at least 3 peripheral proteins of the oxygen-evolving complex and a large number of cofactors. It forms dimeric complexes. Requires Binds multiple chlorophylls and provides some of the ligands for the Ca-4Mn-5O cluster of the oxygen-evolving complex. It may also provide a ligand for a Cl- that is required for oxygen evolution. PSII binds additional chlorophylls, carotenoids and specific lipids. as cofactor.

It localises to the plastid. Its subcellular location is the chloroplast thylakoid membrane. In terms of biological role, one of the components of the core complex of photosystem II (PSII). It binds chlorophyll and helps catalyze the primary light-induced photochemical processes of PSII. PSII is a light-driven water:plastoquinone oxidoreductase, using light energy to abstract electrons from H(2)O, generating O(2) and a proton gradient subsequently used for ATP formation. The protein is Photosystem II CP43 reaction center protein of Saccharum hybrid (Sugarcane).